The sequence spans 832 residues: Dolichyl-phosphate-mannose--protein mannosyltransferase 6 (832 aa).

The tract at residues 1 to 44 (MATGYSTGVSPFDLDENNHNDSIHHRHQNHHSQSHDSSGERDDT) is disordered. N-linked (GlcNAc...) asparagine glycans are attached at residues Asn20 and Asn59. Transmembrane regions (helical) follow at residues 135 to 155 (FYFDVHPPLGKLLIGLSGYLA), 175 to 194 (YVFMRIFNCFFGILVTPLAY), 206 to 227 (TCWLIAFMVIFEQLSLTLSKFI), 232 to 252 (MLLFFTVLTMYCLVKVHTLAI), 266 to 286 (LEIKWYILTGISIGCVCSVKW), 293 to 311 (ALVGFYTIVDLWIKFYQTF), and 327 to 347 (LIHWVVRIFTLIIIPMTIYVA). N-linked (GlcNAc...) asparagine glycosylation occurs at Asn357. Positions 383–437 (PRSVAFGSLVTIRSQGLSPNLIHSHPHNYPQGSQEQQVTTYGFKDDNNEFLFEFG) constitute an MIR 1 domain. The N-linked (GlcNAc...) asparagine glycan is linked to Asn453. MIR domains are found at residues 466–522 (HVII…IEIQ) and 537–595 (PSEI…IEKH). The next 4 helical transmembrane spans lie at 676–696 (ITWISTIALIVCPLYLLVVGI), 723–743 (LLAARALLPLAGWVLHYVPFI), 755–775 (VPALYFAIFVAGFIVDAILNL), and 787–807 (IFKVVIYSTLYLVICISFWYF).

This sequence belongs to the glycosyltransferase 39 family.

Its subcellular location is the endoplasmic reticulum membrane. It catalyses the reaction a di-trans,poly-cis-dolichyl beta-D-mannosyl phosphate + L-seryl-[protein] = 3-O-(alpha-D-mannosyl)-L-seryl-[protein] + a di-trans,poly-cis-dolichyl phosphate + H(+). The catalysed reaction is a di-trans,poly-cis-dolichyl beta-D-mannosyl phosphate + L-threonyl-[protein] = 3-O-(alpha-D-mannosyl)-L-threonyl-[protein] + a di-trans,poly-cis-dolichyl phosphate + H(+). The protein operates within protein modification; protein glycosylation. Functionally, protein mannosyltransferase (PMT) involved in hyphal morphogenesis and drug sensitivity. Transfers mannose from Dol-P-mannose to Ser or Thr residues on proteins. PMT1, PMT2 and PMT4 account for most of the protein-O-glycosylation activity, while PMT5 and PMT6 may specifically modulate a much narrower spectrum of target proteins. Required for biofilm formation and virulence. This Candida albicans (strain SC5314 / ATCC MYA-2876) (Yeast) protein is Dolichyl-phosphate-mannose--protein mannosyltransferase 6 (PMT6).